Reading from the N-terminus, the 211-residue chain is Pyridoxine/pyridoxamine 5'-phosphate oxidase (211 aa).

Residues arginine 7–tyrosine 10 and lysine 65 each bind substrate. FMN is bound by residues arginine 60 to lysine 65, phenylalanine 75 to threonine 76, arginine 81, and lysine 82. 3 residues coordinate substrate: tyrosine 122, arginine 126, and serine 130. Residues glutamine 139 to serine 140 and tryptophan 183 each bind FMN. Residue arginine 189–histidine 191 coordinates substrate. Arginine 193 contributes to the FMN binding site.

It belongs to the pyridoxamine 5'-phosphate oxidase family. As to quaternary structure, homodimer. The cofactor is FMN.

The enzyme catalyses pyridoxamine 5'-phosphate + O2 + H2O = pyridoxal 5'-phosphate + H2O2 + NH4(+). The catalysed reaction is pyridoxine 5'-phosphate + O2 = pyridoxal 5'-phosphate + H2O2. Its pathway is cofactor metabolism; pyridoxal 5'-phosphate salvage; pyridoxal 5'-phosphate from pyridoxamine 5'-phosphate: step 1/1. The protein operates within cofactor metabolism; pyridoxal 5'-phosphate salvage; pyridoxal 5'-phosphate from pyridoxine 5'-phosphate: step 1/1. In terms of biological role, catalyzes the oxidation of either pyridoxine 5'-phosphate (PNP) or pyridoxamine 5'-phosphate (PMP) into pyridoxal 5'-phosphate (PLP). This chain is Pyridoxine/pyridoxamine 5'-phosphate oxidase, found in Herminiimonas arsenicoxydans.